A 380-amino-acid chain; its full sequence is Glucose-1-phosphate adenylyltransferase (380 aa).

Alpha-D-glucose 1-phosphate is bound by residues Tyr-99, Gly-164, 179-180 (EK), and Ser-190.

This sequence belongs to the bacterial/plant glucose-1-phosphate adenylyltransferase family. As to quaternary structure, homotetramer.

It carries out the reaction alpha-D-glucose 1-phosphate + ATP + H(+) = ADP-alpha-D-glucose + diphosphate. The protein operates within glycan biosynthesis; glycogen biosynthesis. Its function is as follows. Involved in the biosynthesis of ADP-glucose, a building block required for the elongation reactions to produce glycogen. Catalyzes the reaction between ATP and alpha-D-glucose 1-phosphate (G1P) to produce pyrophosphate and ADP-Glc. This chain is Glucose-1-phosphate adenylyltransferase, found in Bacillus subtilis (strain 168).